The chain runs to 231 residues: MRLLFFLLITLLFAACSSTPKVHQPKHSSKTEKDLGIGLSPTPPPNERIPGEKSRAMLMEMEGREIPVRIPDANASKIDKNVSNPISIMSSSGGLLTLWALKPRNWVWGYTPIDSFEFGRAKFWRIISFSNGQVIIKNMQEGTCLQAYGNGVIHDICDSKNQAQLWNLNFFDNQAIQIQSVSAKTCLQTPTVRTTTYYSIYLTKCATSSNLDQQWYITPVALEPEPIFFIK.

The N-terminal stretch at Met-1 to Ala-15 is a signal peptide. Cys-16 carries N-palmitoyl cysteine lipidation. The S-diacylglycerol cysteine moiety is linked to residue Cys-16. The segment at Pro-20 to Gly-51 is disordered. The tract at residues Trp-99–Tyr-110 is mediates binding to target cells. Residues Ser-130–Ile-217 enclose the Ricin B-type lectin domain.

As to quaternary structure, heterotrimer of 3 subunits, CdtA, CdtB and CdtC.

It is found in the cell outer membrane. In terms of biological role, CDTs are cytotoxins which induce cell distension, growth arrest in G2/M phase, nucleus swelling, and chromatin fragmentation in HeLa cells. This chain is Cytolethal distending toxin subunit A (cdtA), found in Helicobacter hepaticus (strain ATCC 51449 / 3B1).